Consider the following 134-residue polypeptide: MEQGLVVTQLDVQPGECVKVKGKILSDAKGFSVNVGKDSSTLMLHFNPRFDCHGDVNTVVCNSKEDGTWGEEDRKADFPFQQGDKVEICISFDAAEVKVKVPEVEFEFPNRLGMEKIQYLAVEGDFKVKAIKFS.

The residue at position 1 (methionine 1) is an N-acetylmethionine. The Galectin domain maps to 4 to 134 (GLVVTQLDVQ…DFKVKAIKFS (131 aa)). Residue 69–75 (WGEEDRK) coordinates a beta-D-galactoside.

In terms of assembly, homodimer. Mainly in the liver (adult), mainly in the muscle (embryo).

Functionally, this protein binds beta-galactoside. Its physiological function is not yet known. It may be involved in the regulation of differentiation. This is 16 kDa beta-galactoside-binding lectin from Gallus gallus (Chicken).